Here is a 79-residue protein sequence, read N- to C-terminus: Cytochrome b (79 aa).

3 helical membrane-spanning segments follow: residues 1 to 7 (TALFLAM), 31 to 52 (WLIRNMHANGASFLFICIYLHI), and 67 to 79 (WNIGVILLLLTMM). The heme b site is built by His37 and His51.

It belongs to the cytochrome b family. In terms of assembly, the cytochrome bc1 complex contains 3 respiratory subunits (MT-CYB, CYC1 and UQCRFS1), 2 core proteins (UQCRC1 and UQCRC2) and probably 6 low-molecular weight proteins. Heme b is required as a cofactor.

It localises to the mitochondrion inner membrane. Its function is as follows. Component of the ubiquinol-cytochrome c reductase complex (complex III or cytochrome b-c1 complex) that is part of the mitochondrial respiratory chain. The b-c1 complex mediates electron transfer from ubiquinol to cytochrome c. Contributes to the generation of a proton gradient across the mitochondrial membrane that is then used for ATP synthesis. The polypeptide is Cytochrome b (mt-cyb) (Julidochromis regani (Convict julie)).